Consider the following 535-residue polypeptide: Expansin-like protein 9 (535 aa).

Positions 1 to 25 are cleaved as a signal peptide; the sequence is MKINKNNYFKIIIFIIYVIINLINA. N-linked (GlcNAc...) asparagine glycosylation occurs at asparagine 24. Over 26–514 the chain is Extracellular; it reads SDNVKLSNCG…DNSSNILLFS (489 aa). The region spanning 31-144 is the Expansin-like EG45 domain; the sequence is LSNCGQARAE…QEVSCGFLGN (114 aa). Disulfide bonds link cysteine 34/cysteine 75 and cysteine 78/cysteine 139. N-linked (GlcNAc...) asparagine glycans are attached at residues asparagine 122, asparagine 257, and asparagine 292. The segment at 459–487 is disordered; that stretch reads VDGSSNDDDGTGGTGGGASNKVGKRVDGE. Asparagine 506 is a glycosylation site (N-linked (GlcNAc...) asparagine). The chain crosses the membrane as a helical span at residues 515–535; that stretch reads FNITLTFLLLSLIINILLLLF.

Belongs to the expansin family. Expansin A subfamily.

It is found in the membrane. Functionally, may serve to lubricate the movement of the cellulose microfibrils during cell growth and wall extension and/or may serve to maintain the fluid state of the slug cell wall. The chain is Expansin-like protein 9 (expl9) from Dictyostelium discoideum (Social amoeba).